Reading from the N-terminus, the 689-residue chain is Glycine--tRNA ligase beta subunit (689 aa).

The protein belongs to the class-II aminoacyl-tRNA synthetase family. As to quaternary structure, tetramer of two alpha and two beta subunits.

The protein resides in the cytoplasm. The catalysed reaction is tRNA(Gly) + glycine + ATP = glycyl-tRNA(Gly) + AMP + diphosphate. This chain is Glycine--tRNA ligase beta subunit, found in Mannheimia succiniciproducens (strain KCTC 0769BP / MBEL55E).